A 378-amino-acid polypeptide reads, in one-letter code: ATP phosphoribosyltransferase regulatory subunit (378 aa).

Belongs to the class-II aminoacyl-tRNA synthetase family. HisZ subfamily. As to quaternary structure, heteromultimer composed of HisG and HisZ subunits.

It is found in the cytoplasm. The protein operates within amino-acid biosynthesis; L-histidine biosynthesis; L-histidine from 5-phospho-alpha-D-ribose 1-diphosphate: step 1/9. In terms of biological role, required for the first step of histidine biosynthesis. May allow the feedback regulation of ATP phosphoribosyltransferase activity by histidine. The sequence is that of ATP phosphoribosyltransferase regulatory subunit from Brucella abortus (strain 2308).